The chain runs to 266 residues: ATP synthase subunit a (266 aa).

6 helical membrane-spanning segments follow: residues 38–58, 99–119, 126–146, 162–182, 191–211, and 224–244; these read KQMLLVILSVVIIATFFILAA, LLFSLFFFILVNNIYGAIPVI, HVGGAYVMAGIVYFTWIIIGI, GVPWYILPIVVPIEIISNFLV, LFATMLAGHLIVMLAGSGIEF, and SVLVLVGAVAMYMLEALIMAL.

It belongs to the ATPase A chain family. As to quaternary structure, F-type ATPases have 2 components, CF(1) - the catalytic core - and CF(0) - the membrane proton channel. CF(1) has five subunits: alpha(3), beta(3), gamma(1), delta(1), epsilon(1). CF(0) has three main subunits: a(1), b(2) and c(9-12). The alpha and beta chains form an alternating ring which encloses part of the gamma chain. CF(1) is attached to CF(0) by a central stalk formed by the gamma and epsilon chains, while a peripheral stalk is formed by the delta and b chains.

It localises to the cell membrane. Key component of the proton channel; it plays a direct role in the translocation of protons across the membrane. This is ATP synthase subunit a from Paenarthrobacter aurescens (strain TC1).